Consider the following 244-residue polypeptide: MATPTQEQLKTLEQSRQRLVQLTRSLASLITSLNQSDPLPSWSSLQSQASIISNNLLSVSDHLSDNRDLLTSLVAYPGPDYPGRTQANTLEQLLRTKLDPRVEDWVARGRKAGASALEDKSGLAEAELAELWDWAPVEANQEARRRNWGGNFTLEEREMGVQNVVTGLARVLEDEGSESEDEEEGEEDEMEIVGVRRQSAGAGFEFDIAPASAAQHQQQKFVEPAVPLEDILRFMTTGAEPGKR.

The stretch at 6-30 (QEQLKTLEQSRQRLVQLTRSLASLI) forms a coiled coil.

The protein belongs to the Mediator complex subunit 8 family. In terms of assembly, component of the Mediator complex.

The protein resides in the nucleus. Functionally, component of the Mediator complex, a coactivator involved in the regulated transcription of nearly all RNA polymerase II-dependent genes. Mediator functions as a bridge to convey information from gene-specific regulatory proteins to the basal RNA polymerase II transcription machinery. Mediator is recruited to promoters by direct interactions with regulatory proteins and serves as a scaffold for the assembly of a functional preinitiation complex with RNA polymerase II and the general transcription factors. In Aspergillus oryzae (strain ATCC 42149 / RIB 40) (Yellow koji mold), this protein is Mediator of RNA polymerase II transcription subunit 8 (med8).